A 307-amino-acid chain; its full sequence is Taste receptor type 2 member 10 (307 aa).

Over 1–6 (MLRVVE) the chain is Extracellular. The chain crosses the membrane as a helical span at residues 7 to 27 (GIFIFVVISEXVFGVLGNGFI). Residues 28–42 (GLVNCIDCAKNKLST) are Cytoplasmic-facing. Residues 43–63 (IGFILTGLAISRIFLIWIIIT) form a helical membrane-spanning segment. The Extracellular portion of the chain corresponds to 64–100 (DGFIQIFSPDIYASGNLIEYISYFWVIGNQSSMWFAT). Asn92 carries an N-linked (GlcNAc...) asparagine glycan. A helical transmembrane segment spans residues 101 to 121 (SLSIFYFLKIANFSNYIFLWL). At 122–126 (KSRTN) the chain is on the cytoplasmic side. A helical transmembrane segment spans residues 127–147 (MVLPFMIVFLLISSLLNFAHI). Residues 148–179 (AKILNDYKMKNDTVWDLNMYKSEYFIKQILLN) are Extracellular-facing. An N-linked (GlcNAc...) asparagine glycan is attached at Asn158. The chain crosses the membrane as a helical span at residues 180-200 (LGVIFFFTLSLITCVFLIISL). The Cytoplasmic segment spans residues 201 to 227 (WRHNRQMQSNVTGLRDSNTEAHVKAMK). The helical transmembrane segment at 228–248 (VLISFXILFILYFIGMAIEIS) threads the bilayer. At 249–257 (CFTVRENKL) the chain is on the extracellular side. The chain crosses the membrane as a helical span at residues 258 to 278 (LLMFGMTTTAIYPWGHSFILI). At 279–307 (LGNSKLKQASLRVLQQLKCCEKRKNLRVT) the chain is on the cytoplasmic side.

Belongs to the G-protein coupled receptor T2R family.

It is found in the membrane. Its function is as follows. Receptor that may play a role in the perception of bitterness and is gustducin-linked. May play a role in sensing the chemical composition of the gastrointestinal content. The activity of this receptor may stimulate alpha gustducin, mediate PLC-beta-2 activation and lead to the gating of TRPM5. The polypeptide is Taste receptor type 2 member 10 (TAS2R10) (Gorilla gorilla gorilla (Western lowland gorilla)).